The following is a 373-amino-acid chain: Response regulator aspartate phosphatase J (373 aa).

2 TPR repeats span residues 99–135 and 146–179; these read YYFYYFRGMYEFKQKNFILAIDHYKHAEEKLEYVEDE and AEVYYHIKQTYFSMNYASQALDIYTKYELYGRRR. L-glutamyl-L-arginyl-glycyl-L-methionyl-L-threonine-binding residues include Glu147, Tyr150, Gln181, Asp192, Tyr217, Asn225, His228, Gln260, Tyr297, Lys300, and Asp335. 2 TPR repeats span residues 220-253 and 259-292; these read AAAYYNVGHCKYSLGDYKEAEGYFKTAAAIFEEH and VQAVFSLTHIYCKEGKYDKAVEAYDRGIKSAAEW. A TPR 5 repeat occupies 334-367; sequence EDLLHDTAERFNQLEHYESAAFFYRRLMNIKKKL.

It belongs to the Rap family. Monomer in solution. Homodimer.

The protein resides in the cytoplasm. Its activity is regulated as follows. Inhibited in vitro by the competence and sporulation stimulating factor (CSF), encoded by phrC. However, CSF has at least three targets (RapB, RapC, and RapJ) and the physiological importance of RapJ inhibition by CSF is unknown. Interaction with CSF induces a conformational change in RapJ. Involved in the regulation of sporulation. Acts as a phosphatase that specifically dephosphorylates the sporulation initiation phosphotransferase Spo0F and inhibits its activity. This chain is Response regulator aspartate phosphatase J (rapJ), found in Bacillus subtilis (strain 168).